The primary structure comprises 366 residues: Pyrimidine monooxygenase RutA (366 aa).

FMN contacts are provided by residues 49 to 50, Asn115, Glu124, 140 to 141, and Ser190; these read IK and RY.

This sequence belongs to the NtaA/SnaA/DszA monooxygenase family. RutA subfamily.

It catalyses the reaction uracil + FMNH2 + NADH + O2 = (Z)-3-ureidoacrylate + FMN + NAD(+) + H2O + H(+). The catalysed reaction is thymine + FMNH2 + NADH + O2 = (Z)-2-methylureidoacrylate + FMN + NAD(+) + H2O + H(+). Functionally, catalyzes the pyrimidine ring opening between N-3 and C-4 by an unusual flavin hydroperoxide-catalyzed mechanism, adding oxygen atoms in the process to yield ureidoacrylate peracid, that immediately reacts with FMN forming ureidoacrylate and FMN-N(5)-oxide. The FMN-N(5)-oxide reacts spontaneously with NADH to produce FMN. Requires the flavin reductase RutF to regenerate FMN in vivo. The chain is Pyrimidine monooxygenase RutA from Serratia proteamaculans (strain 568).